The primary structure comprises 571 residues: Chaperonin GroEL 1 (571 aa).

Residues 29 to 32, Lys50, 86 to 90, Gly416, and Asp498 each bind ATP; these read TLGP and DGTTT.

This sequence belongs to the chaperonin (HSP60) family. In terms of assembly, forms a cylinder of 14 subunits composed of two heptameric rings stacked back-to-back. Interacts with the co-chaperonin GroES.

Its subcellular location is the cytoplasm. The enzyme catalyses ATP + H2O + a folded polypeptide = ADP + phosphate + an unfolded polypeptide.. In terms of biological role, together with its co-chaperonin GroES, plays an essential role in assisting protein folding. The GroEL-GroES system forms a nano-cage that allows encapsulation of the non-native substrate proteins and provides a physical environment optimized to promote and accelerate protein folding. This Rhodopirellula baltica (strain DSM 10527 / NCIMB 13988 / SH1) protein is Chaperonin GroEL 1.